Consider the following 711-residue polypeptide: Receptor-like protein 43 (711 aa).

The N-terminal stretch at 1–30 (MKGFWNSKSTIRITLSFIFLFISQFSDVLA) is a signal peptide. Residues 31 to 666 (APTRHLCRPE…EDEEVISWIA (636 aa)) are Extracellular-facing. Residues Asn-78, Asn-114, Asn-143, Asn-167, and Asn-191 are each glycosylated (N-linked (GlcNAc...) asparagine). 8 LRR repeats span residues 120-143 (LHFLTTLDLSFNDFKGQIMSSIEN), 144-168 (LSHLTYLDLSFNHFSGQVPSSIGNL), 170-192 (HLTFLDLYCNQFSGQVPSSIGNL), 193-216 (SHLTTLELSFNRFFGQFPSSIGGL), 218-240 (HLTTLNLFVNNFLGQIPSSIGNL), 241-266 (SNLTSLYLCKNNFSGQIPSFIGNLSQ), 268-288 (TRLDLSSNNFFGEIPGWLWTL), and 289-316 (PNLFYVNLSYNTFIGFQRPNKPEPSMGH). N-linked (GlcNAc...) asparagine glycans are attached at residues Asn-239, Asn-242, Asn-252, and Asn-263. N-linked (GlcNAc...) asparagine glycosylation is found at Asn-295, Asn-323, Asn-347, Asn-362, and Asn-372. The LRR 9; degenerate repeat unit spans residues 317 to 334 (LLGSNNNFTGKIPSFICE). LRR repeat units follow at residues 335-358 (LRSLETLDLSDNNFSGLIPRCMGN), 360-384 (KSNLSHLNLRQNNLSGGLPKHIFEI), 386-406 (RSLDVGHNQLVGKLPRSLRFF), 407-430 (STLEVLNVESNRINDTFPFWLTSL), 431-452 (PKLQVLVLRSNAFHGPIHEASF), 453-476 (LKLRIIDISHNHFNGTLPSDYFVK), 519-543 (LTIYTALDFSGNKFEGEIPKSIGLL), 544-567 (KELLVLNLSNNAFTGHIPSSMGKL), 568-591 (TALESLDVSQNKLYGEIPQEIGNL), and 593-616 (FLSCMNFSHNQLAGLVPGGQQFLT). Asn-420 carries an N-linked (GlcNAc...) asparagine glycan. Residue Asn-466 is glycosylated (N-linked (GlcNAc...) asparagine). 3 N-linked (GlcNAc...) asparagine glycosylation sites follow: Asn-550, Asn-590, and Asn-598. The chain crosses the membrane as a helical span at residues 667–687 (AAIGFIPGIVLGLTIGYILVF). Topologically, residues 688 to 711 (YKPEWFIKTFGRNNCRRRSTTTTH) are cytoplasmic.

This sequence belongs to the RLP family.

The protein resides in the cell membrane. The chain is Receptor-like protein 43 from Arabidopsis thaliana (Mouse-ear cress).